We begin with the raw amino-acid sequence, 264 residues long: 3-methyl-2-oxobutanoate hydroxymethyltransferase (264 aa).

Mg(2+) is bound by residues aspartate 45 and aspartate 84. 3-methyl-2-oxobutanoate is bound by residues 45 to 46 (DS), aspartate 84, and lysine 112. A Mg(2+)-binding site is contributed by glutamate 114. Glutamate 181 (proton acceptor) is an active-site residue.

This sequence belongs to the PanB family. Homodecamer; pentamer of dimers. Mg(2+) serves as cofactor.

The protein resides in the cytoplasm. It carries out the reaction 3-methyl-2-oxobutanoate + (6R)-5,10-methylene-5,6,7,8-tetrahydrofolate + H2O = 2-dehydropantoate + (6S)-5,6,7,8-tetrahydrofolate. It participates in cofactor biosynthesis; (R)-pantothenate biosynthesis; (R)-pantoate from 3-methyl-2-oxobutanoate: step 1/2. In terms of biological role, catalyzes the reversible reaction in which hydroxymethyl group from 5,10-methylenetetrahydrofolate is transferred onto alpha-ketoisovalerate to form ketopantoate. The chain is 3-methyl-2-oxobutanoate hydroxymethyltransferase from Vibrio cholerae serotype O1 (strain ATCC 39541 / Classical Ogawa 395 / O395).